A 158-amino-acid chain; its full sequence is SsrA-binding protein (158 aa).

A disordered region spans residues 133–158 (QLHDKRETEKKRDWNKEKGRLLRDKH).

Belongs to the SmpB family.

Its subcellular location is the cytoplasm. In terms of biological role, required for rescue of stalled ribosomes mediated by trans-translation. Binds to transfer-messenger RNA (tmRNA), required for stable association of tmRNA with ribosomes. tmRNA and SmpB together mimic tRNA shape, replacing the anticodon stem-loop with SmpB. tmRNA is encoded by the ssrA gene; the 2 termini fold to resemble tRNA(Ala) and it encodes a 'tag peptide', a short internal open reading frame. During trans-translation Ala-aminoacylated tmRNA acts like a tRNA, entering the A-site of stalled ribosomes, displacing the stalled mRNA. The ribosome then switches to translate the ORF on the tmRNA; the nascent peptide is terminated with the 'tag peptide' encoded by the tmRNA and targeted for degradation. The ribosome is freed to recommence translation, which seems to be the essential function of trans-translation. In Beijerinckia indica subsp. indica (strain ATCC 9039 / DSM 1715 / NCIMB 8712), this protein is SsrA-binding protein.